Here is a 382-residue protein sequence, read N- to C-terminus: D-galactonate dehydratase (382 aa).

D183 contributes to the Mg(2+) binding site. Catalysis depends on H185, which acts as the Proton donor. The Mg(2+) site is built by E209 and E235. The active-site Proton acceptor is the H285. A disordered region spans residues 361–382 (NENPPDWRNPVWRHSDGSIAEW).

It belongs to the mandelate racemase/muconate lactonizing enzyme family. GalD subfamily. Mg(2+) is required as a cofactor.

The catalysed reaction is D-galactonate = 2-dehydro-3-deoxy-D-galactonate + H2O. It participates in carbohydrate acid metabolism; D-galactonate degradation; D-glyceraldehyde 3-phosphate and pyruvate from D-galactonate: step 1/3. Its function is as follows. Catalyzes the dehydration of D-galactonate to 2-keto-3-deoxy-D-galactonate. The polypeptide is D-galactonate dehydratase (Xanthomonas euvesicatoria pv. vesicatoria (strain 85-10) (Xanthomonas campestris pv. vesicatoria)).